We begin with the raw amino-acid sequence, 1216 residues long: SPOC domain-containing protein 1 (1216 aa).

Disordered stretches follow at residues 1–74 (MSQA…RAAG), 166–216 (EARD…GAHS), 236–325 (NLLS…PPQS), 348–462 (RTGS…PRLE), and 511–601 (SSPS…QQEK). Positions 36–50 (PGLSPDGPGASSGPG) are enriched in low complexity. A compositionally biased stretch (basic and acidic residues) spans 177-190 (CDRRSPTLSKEEPP). Over residues 204–213 (RVRKKWRRQG) the composition is skewed to basic residues. The span at 266–278 (SGPGEPGGSGAGC) shows a compositional bias: gly residues. Low complexity predominate over residues 314 to 325 (SLSSAAQAPPQS). The segment covering 436–452 (RGTDRSSDNSHQDRPEE) has biased composition (basic and acidic residues). Acidic residues predominate over residues 581-592 (EAEEDSLPEQPE). The TFIIS central domain maps to 608-728 (VRGTVVRSMQ…IIEQQQKEPC (121 aa)). The interval 823–850 (QTPMPAPEMPKTRELSPTEPQDRVPPSG) is disordered. The segment covering 832-844 (PKTRELSPTEPQD) has biased composition (basic and acidic residues). The 104-residue stretch at 867–970 (WEGVLDMFSI…VEHMGMVLLP (104 aa)) folds into the SPOC domain. A compositionally biased stretch (basic and acidic residues) spans 1046 to 1055 (RYYQPDDRRP). Disordered stretches follow at residues 1046–1140 (RYYQ…QHFH) and 1176–1216 (PRPL…PRKA).

As to quaternary structure, interacts with DNMT3A, DNMT3C and DNMT3L. Interacts with C19orf84. Interacts with SPIN1; promoting recruitment to transposons marked with histone H3 trimethylated at both 'Lys-4' and 'Lys-9' (H3K4me3K9me3).

The protein localises to the nucleus. It localises to the chromosome. Its function is as follows. Protein adapter that acts as an essential executor of PIWIL4-piRNA pathway directed transposon DNA methylation and silencing in the male embryonic germ cells. Recruited to young transposons, which are specifically marked with histone H3 trimethylated at both 'Lys-4' and 'Lys-9' (H3K4me3K9me3), via its association with SPIN1 chromatin reader, and associates with the de novo DNA methylation machinery and repressive chromatin remodeling complexes. Following this, PIWIL4 engages with nascent transposable element transcript to direct piRNA-directed DNA methylation. Not required for piRNA biosynthesis. The polypeptide is SPOC domain-containing protein 1 (Homo sapiens (Human)).